Consider the following 1480-residue polypeptide: DNA polymerase zeta catalytic subunit (1480 aa).

A disordered region spans residues 403 to 488 (DRSKFPKSPL…GDTRKAGKRL (86 aa)). The span at 411–427 (PLNSSQEVTIHSSQDRQ) shows a compositional bias: polar residues. A compositionally biased stretch (basic and acidic residues) spans 457–468 (TKREIEFCRDLP). Positions 470 to 479 (RPTSSEPNQG) are enriched in polar residues. Residues C1381, C1384, C1400, and C1403 each coordinate Zn(2+). The segment at 1381 to 1403 (CSSCLKNNIEIIPDKINSLCSDC) adopts a CysA-type zinc-finger fold. Residues C1432, C1435, C1446, and C1451 each contribute to the [4Fe-4S] cluster site. The CysB motif motif lies at 1432 to 1451 (CRGCSKLSSSDPVLCKSNSC).

The protein belongs to the DNA polymerase type-B family. Forms DNA polymerase zeta with rev7. [4Fe-4S] cluster serves as cofactor.

The protein resides in the mitochondrion. The protein localises to the nucleus. It catalyses the reaction DNA(n) + a 2'-deoxyribonucleoside 5'-triphosphate = DNA(n+1) + diphosphate. Functionally, nonessential DNA polymerase. Required for DNA damage induced mutagenesis. Involved in DNA repair, mitochondrial DNA repair and translesion synthesis. Has a role in the bypass of abasic (AP) sites. The protein is DNA polymerase zeta catalytic subunit (rev3) of Schizosaccharomyces pombe (strain 972 / ATCC 24843) (Fission yeast).